A 617-amino-acid polypeptide reads, in one-letter code: Chaperone protein DnaK (617 aa).

The residue at position 174 (T174) is a Phosphothreonine; by autocatalysis. The segment covering 575–592 (AQAQQQAQQQAQGQQGAQ) has biased composition (low complexity). The disordered stretch occupies residues 575–617 (AQAQQQAQQQAQGQQGAQTDNQTGQNDGKTIDVDYEEVDDDDK). Over residues 593 to 602 (TDNQTGQNDG) the composition is skewed to polar residues. Over residues 607-617 (VDYEEVDDDDK) the composition is skewed to acidic residues.

Belongs to the heat shock protein 70 family.

Functionally, acts as a chaperone. This is Chaperone protein DnaK from Halothermothrix orenii (strain H 168 / OCM 544 / DSM 9562).